The primary structure comprises 217 residues: MTAIRVPRRRASADLQGGFDFSRPDEIVCGVDEAGRGPLAGPVVAAAVILDPARPIDGLDDSKALSAKKRDALYDLIVARASAFCVASASVDEIDTLNILHATMLAMKRAVEGLSVLPTLAQIDGNRCPTLTVRAEAIVSGDALVPSISAASILAKVTRDRMLVDLHERFPVYGFNMHVGYSTPQHLAALREHGPCEVHRRSFAPVREALDLMAGSR.

The RNase H type-2 domain occupies 26–215 (EIVCGVDEAG…VREALDLMAG (190 aa)). Residues Asp32, Glu33, and Asp124 each contribute to the a divalent metal cation site.

The protein belongs to the RNase HII family. Mn(2+) is required as a cofactor. It depends on Mg(2+) as a cofactor.

Its subcellular location is the cytoplasm. It carries out the reaction Endonucleolytic cleavage to 5'-phosphomonoester.. In terms of biological role, endonuclease that specifically degrades the RNA of RNA-DNA hybrids. The chain is Ribonuclease HII from Burkholderia ambifaria (strain ATCC BAA-244 / DSM 16087 / CCUG 44356 / LMG 19182 / AMMD) (Burkholderia cepacia (strain AMMD)).